The primary structure comprises 211 residues: ATP phosphoribosyltransferase (211 aa).

It belongs to the ATP phosphoribosyltransferase family. Short subfamily. Heteromultimer composed of HisG and HisZ subunits.

The protein resides in the cytoplasm. It carries out the reaction 1-(5-phospho-beta-D-ribosyl)-ATP + diphosphate = 5-phospho-alpha-D-ribose 1-diphosphate + ATP. It participates in amino-acid biosynthesis; L-histidine biosynthesis; L-histidine from 5-phospho-alpha-D-ribose 1-diphosphate: step 1/9. Catalyzes the condensation of ATP and 5-phosphoribose 1-diphosphate to form N'-(5'-phosphoribosyl)-ATP (PR-ATP). Has a crucial role in the pathway because the rate of histidine biosynthesis seems to be controlled primarily by regulation of HisG enzymatic activity. This is ATP phosphoribosyltransferase from Pseudomonas putida (strain W619).